The primary structure comprises 100 residues: Urease subunit gamma (100 aa).

The protein belongs to the urease gamma subunit family. In terms of assembly, heterotrimer of UreA (gamma), UreB (beta) and UreC (alpha) subunits. Three heterotrimers associate to form the active enzyme.

The protein resides in the cytoplasm. The catalysed reaction is urea + 2 H2O + H(+) = hydrogencarbonate + 2 NH4(+). Its pathway is nitrogen metabolism; urea degradation; CO(2) and NH(3) from urea (urease route): step 1/1. The chain is Urease subunit gamma from Burkholderia mallei (strain NCTC 10247).